The primary structure comprises 321 residues: Torsin-2A (321 aa).

The signal sequence occupies residues 1–26 (MAAATRGCRPWGSLLGLLGLVSAAAA). Position 93–100 (93–100 (GWTGTGKS)) interacts with ATP. Asparagine 149 carries N-linked (GlcNAc...) asparagine glycosylation.

The protein belongs to the ClpA/ClpB family. Torsin subfamily. As to quaternary structure, homohexamer. Interacts with TOR1AIP1. In terms of tissue distribution, isoform 1 is expressed ubiquitously, except in cardiac and endothelial tissues.

Its subcellular location is the endoplasmic reticulum lumen. This is Torsin-2A (TOR2A) from Homo sapiens (Human).